The following is a 137-amino-acid chain: NADPH-dependent 7-cyano-7-deazaguanine reductase (137 aa).

The active-site Thioimide intermediate is the Cys-45. Asp-52 functions as the Proton donor in the catalytic mechanism. Substrate contacts are provided by residues 68 to 70 and 87 to 88; these read VEL and QE.

Belongs to the GTP cyclohydrolase I family. QueF type 1 subfamily.

It is found in the cytoplasm. It catalyses the reaction 7-aminomethyl-7-carbaguanine + 2 NADP(+) = 7-cyano-7-deazaguanine + 2 NADPH + 3 H(+). It functions in the pathway tRNA modification; tRNA-queuosine biosynthesis. Its function is as follows. Catalyzes the NADPH-dependent reduction of 7-cyano-7-deazaguanine (preQ0) to 7-aminomethyl-7-deazaguanine (preQ1). The chain is NADPH-dependent 7-cyano-7-deazaguanine reductase from Thermotoga petrophila (strain ATCC BAA-488 / DSM 13995 / JCM 10881 / RKU-1).